The primary structure comprises 186 residues: Adenylate kinase (186 aa).

10–15 is a binding site for ATP; sequence GSGKGT. The tract at residues 30-55 is NMP; the sequence is ATGDVFRERMKTDMALRDIVSSGGYV. AMP-binding positions include Thr31, Arg36, 53–55, 81–84, and Gln88; these read GYV and GYPR. The LID stretch occupies residues 122 to 132; that stretch reads ARSKESGRTDD. Arg123 serves as a coordination point for ATP. Positions 129 and 140 each coordinate AMP. Position 168 (Lys168) interacts with ATP.

It belongs to the adenylate kinase family. In terms of assembly, monomer.

The protein localises to the cytoplasm. It carries out the reaction AMP + ATP = 2 ADP. It functions in the pathway purine metabolism; AMP biosynthesis via salvage pathway; AMP from ADP: step 1/1. Functionally, catalyzes the reversible transfer of the terminal phosphate group between ATP and AMP. Plays an important role in cellular energy homeostasis and in adenine nucleotide metabolism. The protein is Adenylate kinase of Tropheryma whipplei (strain TW08/27) (Whipple's bacillus).